Reading from the N-terminus, the 351-residue chain is Anthranilate phosphoribosyltransferase (351 aa).

Residues Gly80, 83–84, Thr88, 90–93, 108–116, and Ser120 contribute to the 5-phospho-alpha-D-ribose 1-diphosphate site; these read GD, NIST, and KHGNRSVTS. Anthranilate is bound at residue Gly80. Residue Ser92 coordinates Mg(2+). Residue Asn111 coordinates anthranilate. Arg166 contributes to the anthranilate binding site. The Mg(2+) site is built by Asp229 and Glu230.

It belongs to the anthranilate phosphoribosyltransferase family. As to quaternary structure, homodimer. Mg(2+) serves as cofactor.

The catalysed reaction is N-(5-phospho-beta-D-ribosyl)anthranilate + diphosphate = 5-phospho-alpha-D-ribose 1-diphosphate + anthranilate. It functions in the pathway amino-acid biosynthesis; L-tryptophan biosynthesis; L-tryptophan from chorismate: step 2/5. Its function is as follows. Catalyzes the transfer of the phosphoribosyl group of 5-phosphorylribose-1-pyrophosphate (PRPP) to anthranilate to yield N-(5'-phosphoribosyl)-anthranilate (PRA). The protein is Anthranilate phosphoribosyltransferase of Chlorobium phaeovibrioides (strain DSM 265 / 1930) (Prosthecochloris vibrioformis (strain DSM 265)).